The chain runs to 665 residues: Soluble lamin-associated protein of 75 kDa (665 aa).

Residues 309–665 (AFASTSEGPE…GPGKKKAKLT (357 aa)) form a disordered region. Residues 311 to 326 (ASTSEGPEKTPVSTRT) show a composition bias toward polar residues. Residues 327–338 (RSSHLKRPKIGK) are compositionally biased toward basic residues. S348 and S377 each carry phosphoserine. The span at 376-397 (SSEEFLEEEPEQGVIDFEDESG) shows a compositional bias: acidic residues. The segment covering 412–421 (QKQDGDKDSA) has biased composition (basic and acidic residues). A compositionally biased stretch (acidic residues) spans 440–451 (TEDEDSTSEGLE). Phosphoserine is present on residues S447 and S512. Polar residues-rich tracts occupy residues 521 to 533 (LGSS…VSNI) and 553 to 566 (VSQN…SSVE). A phosphoserine mark is found at S610, S613, and S630. A compositionally biased stretch (basic residues) spans 646-665 (NLRRKAKGHKGPGKKKAKLT).

It belongs to the FAM169 family.

It localises to the nucleus envelope. The protein localises to the nucleus inner membrane. The sequence is that of Soluble lamin-associated protein of 75 kDa (Fam169a) from Mus musculus (Mouse).